Consider the following 392-residue polypeptide: CCA-adding enzyme (392 aa).

ATP is bound by residues Ser-45 and Lys-48. Residues Ser-45 and Lys-48 each coordinate CTP. Mg(2+) contacts are provided by Asp-55, Asp-57, and Glu-106. ATP contacts are provided by His-129, Lys-148, and Tyr-157. CTP contacts are provided by His-129, Lys-148, and Tyr-157.

It belongs to the tRNA nucleotidyltransferase/poly(A) polymerase family. Archaeal CCA-adding enzyme subfamily. Homodimer. The cofactor is Mg(2+).

It carries out the reaction a tRNA precursor + 2 CTP + ATP = a tRNA with a 3' CCA end + 3 diphosphate. The enzyme catalyses a tRNA with a 3' CCA end + 2 CTP + ATP = a tRNA with a 3' CCACCA end + 3 diphosphate. Its function is as follows. Catalyzes the addition and repair of the essential 3'-terminal CCA sequence in tRNAs without using a nucleic acid template. Adds these three nucleotides in the order of C, C, and A to the tRNA nucleotide-73, using CTP and ATP as substrates and producing inorganic pyrophosphate. tRNA 3'-terminal CCA addition is required both for tRNA processing and repair. Also involved in tRNA surveillance by mediating tandem CCA addition to generate a CCACCA at the 3' terminus of unstable tRNAs. While stable tRNAs receive only 3'-terminal CCA, unstable tRNAs are marked with CCACCA and rapidly degraded. This Nanoarchaeum equitans (strain Kin4-M) protein is CCA-adding enzyme.